The primary structure comprises 573 residues: Vacuolar protein 8 (573 aa).

A disordered region spans residues 1-36 (MAASAADRMGRQRMSGLSCSAPPRPTVVTNPGNKQD). Positions 27–36 (VVTNPGNKQD) are enriched in polar residues. 9 ARM repeats span residues 60-97 (NRGE…FAEI), 98-137 (TEKD…NLAV), 139-178 (NENK…NLAT), 180-219 (EANK…NMTH), 221-260 (DQNR…NIAV), 264-303 (NRKK…NLAS), 305-344 (SDYQ…NISI), 346-386 (PLNE…NLAA), and 430-469 (DELK…NLSS).

It belongs to the beta-catenin family.

Its subcellular location is the vacuole membrane. Functions in both vacuole inheritance and protein targeting from the cytoplasm to vacuole. The chain is Vacuolar protein 8 (VAC8) from Yarrowia lipolytica (strain CLIB 122 / E 150) (Yeast).